The sequence spans 103 residues: Alkanal monooxygenase alpha chain (103 aa).

Heterodimer of an alpha and a beta chain.

The catalysed reaction is a long-chain fatty aldehyde + FMNH2 + O2 = a long-chain fatty acid + hnu + FMN + H2O + 2 H(+). Functionally, light-emitting reaction in luminous bacteria. This chain is Alkanal monooxygenase alpha chain (luxA), found in Vibrio cholerae.